The following is a 623-amino-acid chain: Membrane protein insertase YidC (623 aa).

Residues 8–28 form a helical membrane-spanning segment; sequence LILATGLSFLVIMVWFFLFPP. Residues 33 to 64 are disordered; that stretch reads TEGEPTVATQQTAVAPSATPDAPTTAVPPDAD. Over residues 44-62 the composition is skewed to low complexity; the sequence is TAVAPSATPDAPTTAVPPD. The next 4 helical transmembrane spans lie at 379–399, 449–469, 507–527, and 543–563; these read MGLAIIALTFLLKALVLPLAY, LPILIQIPIFFSLYKVIFVTI, TTMALIFIGALPILLGVSMWL, and IFAWMPWVFMFMLGHFASGLV. Residues 601-617 show a composition bias toward low complexity; it reads KPAAQPAGKAANDGAAP. Residues 601–623 are disordered; it reads KPAAQPAGKAANDGAAPAKKRKP.

The protein belongs to the OXA1/ALB3/YidC family. Type 1 subfamily. As to quaternary structure, interacts with the Sec translocase complex via SecD. Specifically interacts with transmembrane segments of nascent integral membrane proteins during membrane integration.

It localises to the cell inner membrane. Required for the insertion and/or proper folding and/or complex formation of integral membrane proteins into the membrane. Involved in integration of membrane proteins that insert both dependently and independently of the Sec translocase complex, as well as at least some lipoproteins. Aids folding of multispanning membrane proteins. This is Membrane protein insertase YidC from Cereibacter sphaeroides (strain KD131 / KCTC 12085) (Rhodobacter sphaeroides).